The chain runs to 109 residues: Large ribosomal subunit protein uL22 (109 aa).

The protein belongs to the universal ribosomal protein uL22 family. As to quaternary structure, part of the 50S ribosomal subunit.

This protein binds specifically to 23S rRNA; its binding is stimulated by other ribosomal proteins, e.g. L4, L17, and L20. It is important during the early stages of 50S assembly. It makes multiple contacts with different domains of the 23S rRNA in the assembled 50S subunit and ribosome. Its function is as follows. The globular domain of the protein is located near the polypeptide exit tunnel on the outside of the subunit, while an extended beta-hairpin is found that lines the wall of the exit tunnel in the center of the 70S ribosome. In Wolinella succinogenes (strain ATCC 29543 / DSM 1740 / CCUG 13145 / JCM 31913 / LMG 7466 / NCTC 11488 / FDC 602W) (Vibrio succinogenes), this protein is Large ribosomal subunit protein uL22.